We begin with the raw amino-acid sequence, 344 residues long: uncharacterized protein (344 aa).

The protein belongs to the glycosyltransferase 2 family.

Functionally, may be involved in the production of the exopolysaccharide (EPS) component of the extracellular matrix during biofilm formation. EPS is responsible for the adhesion of chains of cells into bundles. This is an uncharacterized protein from Bacillus subtilis (strain 168).